We begin with the raw amino-acid sequence, 109 residues long: Parvalbumin beta 2 (109 aa).

Position 2 is an N-acetylalanine (alanine 2). EF-hand domains follow at residues 39-74 (KSPA…FSAG) and 78-109 (LSDA…MIKA). Residues aspartate 52, aspartate 54, serine 56, phenylalanine 58, glutamate 60, glutamate 63, aspartate 91, aspartate 93, aspartate 95, lysine 97, and glutamate 102 each coordinate Ca(2+).

The protein belongs to the parvalbumin family. Monomer.

In muscle, parvalbumin is thought to be involved in relaxation after contraction. It binds two calcium ions. This Gadus morhua (Atlantic cod) protein is Parvalbumin beta 2.